A 176-amino-acid polypeptide reads, in one-letter code: Disulfide bond formation protein B (176 aa).

Topologically, residues 1–14 (MLRFLNQCSQGRGA) are cytoplasmic. Residues 15–31 (WLLMAFTALALELTALW) form a helical membrane-spanning segment. Over 32–49 (FQHVMLLKPCVLCIYERC) the chain is Periplasmic. A disulfide bond links Cys41 and Cys44. A helical transmembrane segment spans residues 50-65 (ALFGVLGAALIGAIAP). Residues 66 to 71 (KTPLRY) lie on the Cytoplasmic side of the membrane. The helical transmembrane segment at 72-89 (VAMVIWLYSAFRGVQLTY) threads the bilayer. The Periplasmic portion of the chain corresponds to 90–144 (EHTMLQLYPSPFATCDFMARFPEWLPLDKWVPQVFVASGDCAERQWEFLGLEMPQ). Cys104 and Cys130 are joined by a disulfide. Residues 145-163 (WLLGIFIAYLIVAVLVVIS) form a helical membrane-spanning segment. At 164–176 (QPFKAKKRDLFGR) the chain is on the cytoplasmic side.

The protein belongs to the DsbB family.

The protein localises to the cell inner membrane. Its function is as follows. Required for disulfide bond formation in some periplasmic proteins. Acts by oxidizing the DsbA protein. This is Disulfide bond formation protein B from Escherichia coli O1:K1 / APEC.